Here is a 339-residue protein sequence, read N- to C-terminus: Fructose-1,6-bisphosphatase isozyme 2 (339 aa).

Positions 3 to 10 (DRSPFETD) are important for interaction with ALDOA. Residues Val18 and 28 to 32 (TGELT) contribute to the AMP site. Positions 69 and 98 each coordinate Mg(2+). 113-114 (KY) contributes to the AMP binding site. Residues Asp119, Leu121, and Asp122 each contribute to the Mg(2+) site. Asp122 lines the substrate pocket. AMP is bound at residue Arg141. A Nuclear localization signal motif is present at residues 204–208 (KKKGK). Residue 213 to 216 (NEGY) participates in substrate binding. 2 positions are modified to phosphotyrosine: Tyr216 and Tyr219. Residues 245 to 249 (YVGSM), Tyr265, and Lys275 contribute to the substrate site. Residue Glu281 participates in Mg(2+) binding.

Belongs to the FBPase class 1 family. Homotetramer. Interacts with ALDOA; the interaction blocks inhibition by physiological concentrations of AMP and reduces inhibition by Ca(2+). Interacts with alpha-actinin and F-actin. It depends on Mg(2+) as a cofactor. In terms of tissue distribution, expressed in muscle, intestine, brain and placenta and very weakly in liver.

Its subcellular location is the cell junction. It is found in the cytoplasm. It localises to the nucleus. The protein localises to the myofibril. The protein resides in the sarcomere. Its subcellular location is the z line. The enzyme catalyses beta-D-fructose 1,6-bisphosphate + H2O = beta-D-fructose 6-phosphate + phosphate. It functions in the pathway carbohydrate biosynthesis; gluconeogenesis. Subject to complex allosteric regulation. The enzyme can assume an active R-state, or an inactive T-state. Intermediate conformations may exist. AMP acts as an allosteric inhibitor. Fructose 2,6-bisphosphate acts as a competitive inhibitor. Strongly inhibited by Ca(2+). In terms of biological role, catalyzes the hydrolysis of fructose 1,6-bisphosphate to fructose 6-phosphate in the presence of divalent cations and probably participates in glycogen synthesis from carbohydrate precursors, such as lactate. The sequence is that of Fructose-1,6-bisphosphatase isozyme 2 (Fbp2) from Mus musculus (Mouse).